A 303-amino-acid polypeptide reads, in one-letter code: DDRGK domain-containing protein 1 (303 aa).

Over 1–2 the chain is Lumenal; sequence MD. Residues 3–23 traverse the membrane as a helical segment; sequence LILLIGIATALLIILLTLYFL. Residues 24–303 are Cytoplasmic-facing; the sequence is QKRNAPAETK…TPVTASEGGA (280 aa). Disordered stretches follow at residues 31–53 and 84–160; these read ETKAAAQPQRGVPLRAQEGVPRR and AIDP…AEVE. A compositionally biased stretch (basic and acidic residues) spans 106–160; it reads LDEKMGAKKRAKMEAKEQKRLQREQELHDREQRKVKEAKEEAERKQQDDLDAEVE.

The protein belongs to the DDRGK1 family. In terms of assembly, interacts with Atg9; the interaction is transient.

It is found in the endoplasmic reticulum membrane. Functionally, substrate adapter for ufmylation, the covalent attachment of the ubiquitin-like modifier UFM1 to substrate proteins. Required for ufmylation of Atg9; protects the nervous system during aging, possibly by stabilizing Atg9 and supporting its function. In Drosophila grimshawi (Hawaiian fruit fly), this protein is DDRGK domain-containing protein 1.